The sequence spans 380 residues: Erythronate-4-phosphate dehydrogenase (380 aa).

The substrate site is built by Ser45 and Thr66. Residues Asp146, Thr174, 205 to 207, and Asp231 each bind NAD(+); that span reads ASR. Arg207 is a catalytic residue. The active site involves Glu236. The active-site Proton donor is His253. An NAD(+)-binding site is contributed by Gly256. Tyr257 provides a ligand contact to substrate.

This sequence belongs to the D-isomer specific 2-hydroxyacid dehydrogenase family. PdxB subfamily. Homodimer.

The protein resides in the cytoplasm. The enzyme catalyses 4-phospho-D-erythronate + NAD(+) = (R)-3-hydroxy-2-oxo-4-phosphooxybutanoate + NADH + H(+). Its pathway is cofactor biosynthesis; pyridoxine 5'-phosphate biosynthesis; pyridoxine 5'-phosphate from D-erythrose 4-phosphate: step 2/5. Catalyzes the oxidation of erythronate-4-phosphate to 3-hydroxy-2-oxo-4-phosphonooxybutanoate. The sequence is that of Erythronate-4-phosphate dehydrogenase from Pseudomonas putida (strain GB-1).